The primary structure comprises 628 residues: Chaperone protein HtpG (628 aa).

Residues 1-334 form an a; substrate-binding region; the sequence is MTTIDTASET…SEDLPLNLSR (334 aa). Positions 335–550 are b; that stretch reads EMLQNNPQLA…GFGPDRELEK (216 aa). Residues 551 to 628 are c; the sequence is MLARANKGAA…LVLRGVVAHG (78 aa).

Belongs to the heat shock protein 90 family. As to quaternary structure, homodimer.

Its subcellular location is the cytoplasm. Molecular chaperone. Has ATPase activity. This chain is Chaperone protein HtpG, found in Rhodopseudomonas palustris (strain HaA2).